We begin with the raw amino-acid sequence, 122 residues long: Large ribosomal subunit protein uL14c (122 aa).

It belongs to the universal ribosomal protein uL14 family. In terms of assembly, part of the 50S ribosomal subunit.

The protein resides in the plastid. Its subcellular location is the chloroplast. Functionally, binds to 23S rRNA. The sequence is that of Large ribosomal subunit protein uL14c from Ipomoea purpurea (Common morning glory).